The chain runs to 137 residues: Transcription antitermination protein NusB (137 aa).

Belongs to the NusB family.

Functionally, involved in transcription antitermination. Required for transcription of ribosomal RNA (rRNA) genes. Binds specifically to the boxA antiterminator sequence of the ribosomal RNA (rrn) operons. In Proteus mirabilis (strain HI4320), this protein is Transcription antitermination protein NusB.